A 157-amino-acid polypeptide reads, in one-letter code: Succinate dehydrogenase [ubiquinone] cytochrome b small subunit, mitochondrial (157 aa).

Residues 1-45 (MAALVLLRAGLARPRGVPTALLRGTLLRHSAVLTAAADRSAPARQ) constitute a mitochondrion transit peptide. Over 46–61 (SHGGAPQGHGSSKAAS) the chain is Mitochondrial matrix. The helical transmembrane segment at 62–83 (LHWTSERAVSALLLGLLPAAYL) threads the bilayer. Residues 84–88 (YPGPA) are Mitochondrial intermembrane-facing. A helical transmembrane segment spans residues 89 to 109 (VDYSLAAALTLHGHWGLGQVI). Residue histidine 100 participates in heme b binding. Residues 110-118 (TDYVHGDTP) lie on the Mitochondrial matrix side of the membrane. Residue tyrosine 112 participates in a ubiquinone binding. The helical transmembrane segment at 119-140 (IKVANTGLYVLSAITFTGLCYF) threads the bilayer. The Mitochondrial intermembrane portion of the chain corresponds to 141–157 (NYYDVGICKAVAMLWSI).

It belongs to the CybS family. In terms of assembly, component of complex II composed of four subunits: the flavoprotein (FP) SDHA, iron-sulfur protein (IP) SDHB, and a cytochrome b560 composed of SDHC and SDHD.

The protein localises to the mitochondrion inner membrane. It functions in the pathway carbohydrate metabolism; tricarboxylic acid cycle. Membrane-anchoring subunit of succinate dehydrogenase (SDH) that is involved in complex II of the mitochondrial electron transport chain and is responsible for transferring electrons from succinate to ubiquinone (coenzyme Q). SDH also oxidizes malate to the non-canonical enol form of oxaloacetate, enol-oxaloacetate. Enol-oxaloacetate, which is a potent inhibitor of the succinate dehydrogenase activity, is further isomerized into keto-oxaloacetate. The polypeptide is Succinate dehydrogenase [ubiquinone] cytochrome b small subunit, mitochondrial (SDHD) (Gallus gallus (Chicken)).